Here is a 133-residue protein sequence, read N- to C-terminus: MGFYQGPDNRKITGGLKGKHRDKRKYEIGNPSTLTTLSAEDIRTKDRTLGGNFKVRLKYTTTANVLDPATNTAKKVKILEVLETPANKELARRGIIIRGAKIRTEAGLAVVTSRPGQDGVINAVLLKNESQGS.

Residues 1–22 (MGFYQGPDNRKITGGLKGKHRD) form a disordered region.

It belongs to the eukaryotic ribosomal protein eS8 family. Part of the 30S ribosomal subunit.

The chain is Small ribosomal subunit protein eS8 from Saccharolobus islandicus (strain M.14.25 / Kamchatka #1) (Sulfolobus islandicus).